A 372-amino-acid polypeptide reads, in one-letter code: Secreted beta-glucosidase SIM1 (372 aa).

The N-terminal stretch at 1 to 15 is a signal peptide; that stretch reads MKYLTLLTVLSTALA. The tract at residues 51 to 85 is disordered; the sequence is VTENASSGASSGETAETIQTRSSSDVSSSSDSNPV. Positions 52-85 are enriched in low complexity; sequence TENASSGASSGETAETIQTRSSSDVSSSSDSNPV. Asparagine 54 and asparagine 351 each carry an N-linked (GlcNAc...) asparagine glycan.

It belongs to the SUN family.

Its subcellular location is the secreted. The protein resides in the cell wall. Cell surface beta-glucosidase involved in cell wall maintenance and cytokinesis. Plays a role redundant to SUN41. The chain is Secreted beta-glucosidase SIM1 (SIM1) from Candida albicans (strain SC5314 / ATCC MYA-2876) (Yeast).